Here is a 465-residue protein sequence, read N- to C-terminus: Sodium-dependent phosphate transport protein 1 (465 aa).

Asn39, Asn47, and Asn56 each carry an N-linked (GlcNAc...) asparagine glycan. Transmembrane regions (helical) follow at residues 79 to 99 (GLIL…VGYL), 117 to 137 (SLMS…VIVC), 176 to 196 (FVMG…LLGW), 199 to 219 (VFYI…FLFF), 260 to 280 (LPLW…SLLV), 304 to 324 (LPYL…DFFL), 337 to 356 (LFTT…LLYL), 363 to 383 (TVIF…GQLI), 399 to 419 (VTAL…GLIL), and 429 to 449 (KIFF…FLFA).

Belongs to the major facilitator superfamily. Sodium/anion cotransporter family. Interacts with PDZK1. Kidney.

The protein resides in the apical cell membrane. The catalysed reaction is 3 Na(+)(out) + phosphate(out) = 3 Na(+)(in) + phosphate(in). The enzyme catalyses urate(out) = urate(in). Important for the resorption of phosphate by the kidney. May be involved in actively transporting phosphate into cells via Na(+) cotransport in the renal brush border membrane. Plays a role in urate transport in the kidney. This Mus musculus (Mouse) protein is Sodium-dependent phosphate transport protein 1 (Slc17a1).